The following is a 321-amino-acid chain: Glucokinase (321 aa).

ATP is bound at residue 8 to 13 (GDVGGT).

Belongs to the bacterial glucokinase family.

The protein localises to the cytoplasm. The enzyme catalyses D-glucose + ATP = D-glucose 6-phosphate + ADP + H(+). The protein is Glucokinase of Citrobacter koseri (strain ATCC BAA-895 / CDC 4225-83 / SGSC4696).